Consider the following 162-residue polypeptide: Peptide methionine sulfoxide reductase MsrA (162 aa).

The active site involves Cys-10.

The protein belongs to the MsrA Met sulfoxide reductase family.

The enzyme catalyses L-methionyl-[protein] + [thioredoxin]-disulfide + H2O = L-methionyl-(S)-S-oxide-[protein] + [thioredoxin]-dithiol. The catalysed reaction is [thioredoxin]-disulfide + L-methionine + H2O = L-methionine (S)-S-oxide + [thioredoxin]-dithiol. In terms of biological role, has an important function as a repair enzyme for proteins that have been inactivated by oxidation. Catalyzes the reversible oxidation-reduction of methionine sulfoxide in proteins to methionine. This Clostridium acetobutylicum (strain ATCC 824 / DSM 792 / JCM 1419 / IAM 19013 / LMG 5710 / NBRC 13948 / NRRL B-527 / VKM B-1787 / 2291 / W) protein is Peptide methionine sulfoxide reductase MsrA.